A 643-amino-acid polypeptide reads, in one-letter code: Threonine--tRNA ligase 1 (643 aa).

The TGS domain maps to 3-64; the sequence is DMVKITFPDG…NEDGTVEIIT (62 aa). The segment at 245 to 542 is catalytic; sequence DHRKLGKELK…LIEEHKGALP (298 aa). Zn(2+)-binding residues include cysteine 338, histidine 389, and histidine 519.

Belongs to the class-II aminoacyl-tRNA synthetase family. In terms of assembly, homodimer. Zn(2+) serves as cofactor.

The protein localises to the cytoplasm. It carries out the reaction tRNA(Thr) + L-threonine + ATP = L-threonyl-tRNA(Thr) + AMP + diphosphate + H(+). Catalyzes the attachment of threonine to tRNA(Thr) in a two-step reaction: L-threonine is first activated by ATP to form Thr-AMP and then transferred to the acceptor end of tRNA(Thr). Also edits incorrectly charged L-seryl-tRNA(Thr). The sequence is that of Threonine--tRNA ligase 1 (thrS) from Bacillus subtilis (strain 168).